The sequence spans 954 residues: Glycine dehydrogenase (decarboxylating) (954 aa).

At Lys-704 the chain carries N6-(pyridoxal phosphate)lysine.

It belongs to the GcvP family. In terms of assembly, the glycine cleavage system is composed of four proteins: P, T, L and H. The cofactor is pyridoxal 5'-phosphate.

It catalyses the reaction N(6)-[(R)-lipoyl]-L-lysyl-[glycine-cleavage complex H protein] + glycine + H(+) = N(6)-[(R)-S(8)-aminomethyldihydrolipoyl]-L-lysyl-[glycine-cleavage complex H protein] + CO2. The glycine cleavage system catalyzes the degradation of glycine. The P protein binds the alpha-amino group of glycine through its pyridoxal phosphate cofactor; CO(2) is released and the remaining methylamine moiety is then transferred to the lipoamide cofactor of the H protein. The protein is Glycine dehydrogenase (decarboxylating) of Vibrio vulnificus (strain YJ016).